The sequence spans 306 residues: Acetyl-coenzyme A carboxylase carboxyl transferase subunit beta (306 aa).

The 270-residue stretch at 28–297 folds into the CoA carboxyltransferase N-terminal domain; the sequence is LWIKCPDTGQ…TPAGKPSTPV (270 aa). Positions 287–306 are disordered; sequence QTPAGKPSTPVAPEPVPDAA. The segment covering 296 to 306 has biased composition (pro residues); it reads PVAPEPVPDAA.

It belongs to the AccD/PCCB family. Acetyl-CoA carboxylase is a heterohexamer composed of biotin carboxyl carrier protein (AccB), biotin carboxylase (AccC) and two subunits each of ACCase subunit alpha (AccA) and ACCase subunit beta (AccD).

The protein resides in the cytoplasm. The catalysed reaction is N(6)-carboxybiotinyl-L-lysyl-[protein] + acetyl-CoA = N(6)-biotinyl-L-lysyl-[protein] + malonyl-CoA. It functions in the pathway lipid metabolism; malonyl-CoA biosynthesis; malonyl-CoA from acetyl-CoA: step 1/1. In terms of biological role, component of the acetyl coenzyme A carboxylase (ACC) complex. Biotin carboxylase (BC) catalyzes the carboxylation of biotin on its carrier protein (BCCP) and then the CO(2) group is transferred by the transcarboxylase to acetyl-CoA to form malonyl-CoA. The sequence is that of Acetyl-coenzyme A carboxylase carboxyl transferase subunit beta from Methylorubrum populi (strain ATCC BAA-705 / NCIMB 13946 / BJ001) (Methylobacterium populi).